The following is a 108-amino-acid chain: ATP-dependent Clp protease adapter protein ClpS (108 aa).

Residues 1–15 (MPHESSPDSQHEHGV) show a composition bias toward basic and acidic residues. Residues 1 to 22 (MPHESSPDSQHEHGVAVEAARP) form a disordered region.

Belongs to the ClpS family. Binds to the N-terminal domain of the chaperone ClpA.

In terms of biological role, involved in the modulation of the specificity of the ClpAP-mediated ATP-dependent protein degradation. The polypeptide is ATP-dependent Clp protease adapter protein ClpS (Stenotrophomonas maltophilia (strain K279a)).